We begin with the raw amino-acid sequence, 304 residues long: Acetyl-coenzyme A carboxylase carboxyl transferase subunit beta (304 aa).

One can recognise a CoA carboxyltransferase N-terminal domain in the interval 23-292 (VWTKCDSCGQ…PNPEAPREGV (270 aa)). Zn(2+) is bound by residues C27, C30, C46, and C49. A C4-type zinc finger spans residues 27 to 49 (CDSCGQVLYRAELERNLEVCPKC). Positions 285–304 (PEAPREGVVVPPVPDQEPEA) are disordered. Over residues 295–304 (PPVPDQEPEA) the composition is skewed to pro residues.

The protein belongs to the AccD/PCCB family. As to quaternary structure, acetyl-CoA carboxylase is a heterohexamer composed of biotin carboxyl carrier protein (AccB), biotin carboxylase (AccC) and two subunits each of ACCase subunit alpha (AccA) and ACCase subunit beta (AccD). Zn(2+) serves as cofactor.

It localises to the cytoplasm. It catalyses the reaction N(6)-carboxybiotinyl-L-lysyl-[protein] + acetyl-CoA = N(6)-biotinyl-L-lysyl-[protein] + malonyl-CoA. Its pathway is lipid metabolism; malonyl-CoA biosynthesis; malonyl-CoA from acetyl-CoA: step 1/1. In terms of biological role, component of the acetyl coenzyme A carboxylase (ACC) complex. Biotin carboxylase (BC) catalyzes the carboxylation of biotin on its carrier protein (BCCP) and then the CO(2) group is transferred by the transcarboxylase to acetyl-CoA to form malonyl-CoA. In Escherichia coli O6:H1 (strain CFT073 / ATCC 700928 / UPEC), this protein is Acetyl-coenzyme A carboxylase carboxyl transferase subunit beta.